The primary structure comprises 210 residues: Probable GTP-binding protein EngB (210 aa).

The EngB-type G domain maps to 25–199; the sequence is TGIEVAFAGR…RQKLDTWFNE (175 aa). Residues 33–40, 60–64, 78–81, 145–148, and 178–180 each bind GTP; these read GRSNAGKS, GRTQL, DLPG, TKAD, and FSS. Mg(2+) contacts are provided by S40 and T62.

Belongs to the TRAFAC class TrmE-Era-EngA-EngB-Septin-like GTPase superfamily. EngB GTPase family. The cofactor is Mg(2+).

In terms of biological role, necessary for normal cell division and for the maintenance of normal septation. In Escherichia coli O157:H7, this protein is Probable GTP-binding protein EngB.